The primary structure comprises 421 residues: Bifunctional NAD biosynthesis protein NadR (421 aa).

The interval 57 to 224 (EKKVGVIFGK…KFIPKEARPF (168 aa)) is nicotinamide mononucleotide adenylyltransferase. NAD(+) is bound by residues 64 to 67 (FGKF), H71, R98, 139 to 152 (EDGI…WQSW), 172 to 174 (SSE), 199 to 201 (FNV), 254 to 256 (SAW), and 289 to 292 (YIDY). The interval 225–421 (FAKTVAILGG…TTFPIKGTSQ (197 aa)) is ribosylnicotinamide kinase.

This sequence in the N-terminal section; belongs to the bacterial NMN adenylyltransferase family. The protein in the C-terminal section; belongs to the bacterial RNK family. In terms of assembly, homotetramer.

It is found in the cell membrane. Its subcellular location is the cytoplasm. It catalyses the reaction beta-nicotinamide D-ribonucleotide + ATP + H(+) = diphosphate + NAD(+). The enzyme catalyses beta-nicotinamide D-riboside + ATP = beta-nicotinamide D-ribonucleotide + ADP + H(+). It participates in cofactor biosynthesis; NAD(+) biosynthesis [regulation]. Its pathway is cofactor biosynthesis; NAD(+) biosynthesis; NAD(+) from nicotinamide D-ribonucleotide: step 1/1. With respect to regulation, feed-back regulated by NAD. At high levels of NAD the RN kinase activity is inhibited. Its function is as follows. This enzyme has two activities: nicotinamide mononucleotide (NMN) adenylyltransferase and ribosylnicotinamide (RN) kinase. The RN kinase activity catalyzes the phosphorylation of RN to form nicotinamide ribonucleotide. The NMN adenylyltransferase activity catalyzes the transfer of the AMP moiety of ATP to nicotinamide ribonucleotide to form NAD(+). This chain is Bifunctional NAD biosynthesis protein NadR (nadR), found in Haemophilus influenzae (strain ATCC 51907 / DSM 11121 / KW20 / Rd).